The sequence spans 185 residues: Threonylcarbamoyl-AMP synthase (185 aa).

The 179-residue stretch at 7–185 (AAQRRAARAH…IDFASGRVLR (179 aa)) folds into the YrdC-like domain.

The protein belongs to the SUA5 family. TsaC subfamily.

The protein resides in the cytoplasm. The catalysed reaction is L-threonine + hydrogencarbonate + ATP = L-threonylcarbamoyladenylate + diphosphate + H2O. Functionally, required for the formation of a threonylcarbamoyl group on adenosine at position 37 (t(6)A37) in tRNAs that read codons beginning with adenine. Catalyzes the conversion of L-threonine, HCO(3)(-)/CO(2) and ATP to give threonylcarbamoyl-AMP (TC-AMP) as the acyladenylate intermediate, with the release of diphosphate. The protein is Threonylcarbamoyl-AMP synthase of Laribacter hongkongensis (strain HLHK9).